Here is a 134-residue protein sequence, read N- to C-terminus: ATP synthase epsilon chain, chloroplastic (134 aa).

The protein belongs to the ATPase epsilon chain family. As to quaternary structure, F-type ATPases have 2 components, CF(1) - the catalytic core - and CF(0) - the membrane proton channel. CF(1) has five subunits: alpha(3), beta(3), gamma(1), delta(1), epsilon(1). CF(0) has three main subunits: a, b and c.

Its subcellular location is the plastid. The protein localises to the chloroplast thylakoid membrane. Its function is as follows. Produces ATP from ADP in the presence of a proton gradient across the membrane. This chain is ATP synthase epsilon chain, chloroplastic, found in Drimys granadensis.